A 372-amino-acid chain; its full sequence is Queuine tRNA-ribosyltransferase (372 aa).

The Proton acceptor role is filled by aspartate 92. Substrate-binding positions include 92–96 (DSGGF), aspartate 146, glutamine 188, and glycine 215. The segment at 246–252 (GIGTLRE) is RNA binding. The Nucleophile role is filled by aspartate 265. Residues 270 to 274 (TRLGR) form an RNA binding; important for wobble base 34 recognition region. Zn(2+) is bound by residues cysteine 303, cysteine 305, cysteine 308, and histidine 334.

It belongs to the queuine tRNA-ribosyltransferase family. As to quaternary structure, homodimer. Within each dimer, one monomer is responsible for RNA recognition and catalysis, while the other monomer binds to the replacement base PreQ1. Zn(2+) is required as a cofactor.

It catalyses the reaction 7-aminomethyl-7-carbaguanine + guanosine(34) in tRNA = 7-aminomethyl-7-carbaguanosine(34) in tRNA + guanine. It functions in the pathway tRNA modification; tRNA-queuosine biosynthesis. Functionally, catalyzes the base-exchange of a guanine (G) residue with the queuine precursor 7-aminomethyl-7-deazaguanine (PreQ1) at position 34 (anticodon wobble position) in tRNAs with GU(N) anticodons (tRNA-Asp, -Asn, -His and -Tyr). Catalysis occurs through a double-displacement mechanism. The nucleophile active site attacks the C1' of nucleotide 34 to detach the guanine base from the RNA, forming a covalent enzyme-RNA intermediate. The proton acceptor active site deprotonates the incoming PreQ1, allowing a nucleophilic attack on the C1' of the ribose to form the product. After dissociation, two additional enzymatic reactions on the tRNA convert PreQ1 to queuine (Q), resulting in the hypermodified nucleoside queuosine (7-(((4,5-cis-dihydroxy-2-cyclopenten-1-yl)amino)methyl)-7-deazaguanosine). This is Queuine tRNA-ribosyltransferase from Synechococcus sp. (strain CC9902).